A 327-amino-acid chain; its full sequence is MAKPIRVLLYYKYVPIENAEQFAADHLAFCKSIGLKGRILVADEGINGTVSGEYETTQKYMDYVHSLPGMEDLWFKIDEEEEQAFKKMFVRYKKEIVHLGLEDNNFDSDINPLETTGAYLSPKEFKDALLDEDTVVLDTRNDYEYDLGHFRGAIRPDIRNFRELPQWVRDHKEEFMDKRVVVYCTGGVRCEKFSGWLVREGYKDVGQLHGGIVTYGKDPEVQGELWDGKLYVFDERIAVDVNHVDPIVVGKDWFDGTPCERYVNCGNPFCNRRILTSEENEDKYLRGCSHECRVHPRNRYVSENDLSQEEVVERLAAIGESLDVTPA.

The region spanning 130-224 (LDEDTVVLDT…YGKDPEVQGE (95 aa)) is the Rhodanese domain. Cys184 (cysteine persulfide intermediate) is an active-site residue.

It belongs to the TrhO family.

The catalysed reaction is uridine(34) in tRNA + AH2 + O2 = 5-hydroxyuridine(34) in tRNA + A + H2O. In terms of biological role, catalyzes oxygen-dependent 5-hydroxyuridine (ho5U) modification at position 34 in tRNAs. The polypeptide is tRNA uridine(34) hydroxylase (Streptococcus thermophilus (strain ATCC BAA-250 / LMG 18311)).